Here is a 466-residue protein sequence, read N- to C-terminus: 3-isopropylmalate dehydratase large subunit (466 aa).

Residues cysteine 349, cysteine 410, and cysteine 413 each coordinate [4Fe-4S] cluster.

The protein belongs to the aconitase/IPM isomerase family. LeuC type 1 subfamily. As to quaternary structure, heterodimer of LeuC and LeuD. It depends on [4Fe-4S] cluster as a cofactor.

The enzyme catalyses (2R,3S)-3-isopropylmalate = (2S)-2-isopropylmalate. It functions in the pathway amino-acid biosynthesis; L-leucine biosynthesis; L-leucine from 3-methyl-2-oxobutanoate: step 2/4. Functionally, catalyzes the isomerization between 2-isopropylmalate and 3-isopropylmalate, via the formation of 2-isopropylmaleate. The protein is 3-isopropylmalate dehydratase large subunit of Ruthia magnifica subsp. Calyptogena magnifica.